The chain runs to 180 residues: Major urinary protein 6 (180 aa).

Positions 1–18 (MKMLLLLCLGLTLVCVHA) are cleaved as a signal peptide. Cysteine 82 and cysteine 175 are oxidised to a cystine.

It belongs to the calycin superfamily. Lipocalin family. Abundant in the urine of adult male mice but absent from that of females.

It is found in the secreted. In terms of biological role, binds pheromones that are released from drying urine of males. These pheromones affect the sexual behavior of females. This Mus musculus (Mouse) protein is Major urinary protein 6 (Mup6).